Consider the following 206-residue polypeptide: Small ribosomal subunit protein uS4 (206 aa).

The S4 RNA-binding domain maps to 96–161; it reads RRLDNVVYRM…QGRIQAALAL (66 aa).

It belongs to the universal ribosomal protein uS4 family. As to quaternary structure, part of the 30S ribosomal subunit. Contacts protein S5. The interaction surface between S4 and S5 is involved in control of translational fidelity.

Its function is as follows. One of the primary rRNA binding proteins, it binds directly to 16S rRNA where it nucleates assembly of the body of the 30S subunit. In terms of biological role, with S5 and S12 plays an important role in translational accuracy. This Legionella pneumophila (strain Corby) protein is Small ribosomal subunit protein uS4.